A 248-amino-acid polypeptide reads, in one-letter code: Isoprenyl transferase (248 aa).

The active site involves aspartate 23. A Mg(2+)-binding site is contributed by aspartate 23. Residues 24 to 27 (GNGR), tryptophan 28, arginine 36, histidine 40, and 68 to 70 (STE) contribute to the substrate site. The active-site Proton acceptor is the asparagine 71. Residues tryptophan 72, arginine 74, arginine 185, and 191–193 (RIS) each bind substrate. Glutamate 204 serves as a coordination point for Mg(2+).

Belongs to the UPP synthase family. As to quaternary structure, homodimer. The cofactor is Mg(2+).

Catalyzes the condensation of isopentenyl diphosphate (IPP) with allylic pyrophosphates generating different type of terpenoids. This Neisseria meningitidis serogroup A / serotype 4A (strain DSM 15465 / Z2491) protein is Isoprenyl transferase.